Here is a 151-residue protein sequence, read N- to C-terminus: Prefoldin subunit alpha (151 aa).

The protein belongs to the prefoldin subunit alpha family. Heterohexamer of two alpha and four beta subunits.

The protein localises to the cytoplasm. Molecular chaperone capable of stabilizing a range of proteins. Seems to fulfill an ATP-independent, HSP70-like function in archaeal de novo protein folding. This Sulfurisphaera tokodaii (strain DSM 16993 / JCM 10545 / NBRC 100140 / 7) (Sulfolobus tokodaii) protein is Prefoldin subunit alpha.